The following is a 618-amino-acid chain: Delta-like protein 3 (618 aa).

A signal peptide spans 1 to 26 (MVSPRMSGLLSQTVILALIFLPQTRP). The Extracellular portion of the chain corresponds to 27–492 (AGVFELQIHS…LRPGDPQRYL (466 aa)). A DSL domain is found at 176-215 (ARCEPPAVGTACTRLCRPRSAPSRCGPGLRPCAPLEDECE). 6 consecutive EGF-like domains span residues 216–249 (APLVCRAGCSPEHGFCEQPGECRCLEGWTGPLCT), 274–310 (GPGPCDGNPCANGGSCSETPRSFECTCPRGFYGLRCE), 312–351 (SGVTCADGPCFNGGLCVGGADPDSAYICHCPPGFQGSNCE), 353–389 (RVDRCSLQPCRNGGLCLDLGHALRCRCRAGFAGPRCE), 391–427 (DLDDCAGRACANGGTCVEGGGAHRCSCALGFGGRDCR), and 429–465 (RADPCAARPCAHGGRCYAHFSGLVCACAPGYMGARCE). Intrachain disulfides connect Cys220–Cys231, Cys224–Cys237, Cys239–Cys248, Cys278–Cys289, Cys283–Cys298, Cys300–Cys309, Cys316–Cys327, Cys321–Cys339, Cys341–Cys350, Cys357–Cys368, Cys362–Cys377, Cys379–Cys388, Cys395–Cys406, Cys400–Cys415, Cys417–Cys426, Cys433–Cys444, Cys438–Cys453, and Cys455–Cys464. The helical transmembrane segment at 493–513 (LPPALGLLVAAGVAGAALLLV) threads the bilayer. At 514–618 (HVRRRGHSQD…PYPSSILSVK (105 aa)) the chain is on the cytoplasmic side. Polar residues predominate over residues 546–562 (NLRTQEGSGDGPSSSVD). The segment at 546 to 566 (NLRTQEGSGDGPSSSVDWNRP) is disordered.

As to quaternary structure, can bind and activate Notch-1 or another Notch receptor. Post-translationally, ubiquitinated by MIB (MIB1 or MIB2), leading to its endocytosis and subsequent degradation.

The protein localises to the membrane. In terms of biological role, inhibits primary neurogenesis. May be required to divert neurons along a specific differentiation pathway. Plays a role in the formation of somite boundaries during segmentation of the paraxial mesoderm. The polypeptide is Delta-like protein 3 (DLL3) (Homo sapiens (Human)).